A 143-amino-acid polypeptide reads, in one-letter code: Sorting nexin-3 (143 aa).

Residues 23-140 enclose the PX domain; the sequence is NILEIDVINP…SSFLQSPEFK (118 aa). Residues arginine 66, serine 68, lysine 92, arginine 97, and arginine 106 each coordinate a 1,2-diacyl-sn-glycero-3-phospho-(1D-myo-inositol-3-phosphate).

It belongs to the sorting nexin family.

It localises to the cytoplasm. The protein localises to the golgi apparatus membrane. It is found in the prevacuolar compartment membrane. In terms of biological role, required for retention of late Golgi membrane proteins. Component of the retrieval machinery that functions by direct interaction with the cytosolic tails of certain TGN membrane proteins during the sorting/budding process at the prevacuolar compartment. Binds phosphatidylinositol 3-phosphate (PtdIns(P3)). The polypeptide is Sorting nexin-3 (snx3) (Schizosaccharomyces pombe (strain 972 / ATCC 24843) (Fission yeast)).